A 20-amino-acid polypeptide reads, in one-letter code: Trypsin inhibitor A chain (20 aa).

This sequence belongs to the protease inhibitor I3 (leguminous Kunitz-type inhibitor) family. In terms of assembly, heterodimer of an 'A' and a 'B' chain linked by a disulfide bond.

Functionally, inhibits trypsin and alpha-chymotrypsin. In Albizia julibrissin (Silk tree), this protein is Trypsin inhibitor A chain.